A 64-amino-acid polypeptide reads, in one-letter code: Large ribosomal subunit protein bL35 (64 aa).

Residues 1-44 (MPKLKTNRGAAKRFKVKASGRISRARSNHSHILTKKDPKRKRRL) form a disordered region. Positions 10 to 44 (AAKRFKVKASGRISRARSNHSHILTKKDPKRKRRL) are enriched in basic residues.

The protein belongs to the bacterial ribosomal protein bL35 family.

The protein is Large ribosomal subunit protein bL35 of Halorhodospira halophila (strain DSM 244 / SL1) (Ectothiorhodospira halophila (strain DSM 244 / SL1)).